We begin with the raw amino-acid sequence, 134 residues long: MENKKTIYFLCTGNSCRSQMAEAWGKQYLGDKWNVYSAGIEAHGVNPNAIKAMNEVNIDITNQTSDIIDANILNRADLVVTLCSHADAVCPSTPPDVHRVHWGFDDPAGKEWSEFQRVRDEIGERIKRFSETGE.

Catalysis depends on nucleophile residues Cys11, Cys83, and Cys90. 2 disulfide bridges follow: Cys11–Cys83 and Cys83–Cys90.

The protein belongs to the low molecular weight phosphotyrosine protein phosphatase family. Thioredoxin-coupled ArsC subfamily.

The protein localises to the cytoplasm. The catalysed reaction is arsenate + [thioredoxin]-dithiol + H(+) = arsenite + [thioredoxin]-disulfide + H2O. In terms of biological role, catalyzes the reduction of arsenate [As(V)] to arsenite [As(III)]. The polypeptide is Arsenate reductase (Bacillus cereus (strain Q1)).